The following is a 367-amino-acid chain: DNA replication and repair protein RecF (367 aa).

Residue 30 to 37 coordinates ATP; it reads GENAQGKT.

Belongs to the RecF family.

It is found in the cytoplasm. Its function is as follows. The RecF protein is involved in DNA metabolism; it is required for DNA replication and normal SOS inducibility. RecF binds preferentially to single-stranded, linear DNA. It also seems to bind ATP. The sequence is that of DNA replication and repair protein RecF from Chlamydia abortus (strain DSM 27085 / S26/3) (Chlamydophila abortus).